The sequence spans 340 residues: Probable rRNA-processing protein EBP2 homolog (340 aa).

A compositionally biased stretch (basic residues) spans 1-10 (MVRKMNKLAK). Disordered stretches follow at residues 1–59 (MVRK…DDDE) and 245–340 (HGLD…RGRR). Composition is skewed to acidic residues over residues 23–37 (PESD…FDNA) and 46–59 (MDIE…DDDE). The stretch at 206–245 (QKEVLAAKNTEKKNLAEAVKKHKKGMKQQLEDMLNNVKRH) forms a coiled coil. 2 stretches are compositionally biased toward gly residues: residues 264–277 (GRGG…GRGG) and 318–333 (PRGG…GRGG).

This sequence belongs to the EBP2 family.

Its subcellular location is the nucleus. The protein resides in the nucleolus. Its function is as follows. Required for the processing of the 27S pre-rRNA. This Caenorhabditis elegans protein is Probable rRNA-processing protein EBP2 homolog.